Reading from the N-terminus, the 388-residue chain is MNLHEYQGKQLFAEYGLPVSKGFAVDTPEQAAEACDKIGGSEWVVKAQVHAGGRGKAGGVKLVRSKEDAKAFAAQWLGKNLVTYQTDANGQPVSKILVESCTDIAKELYLGAVVDRSSRRIVFMASTEGGVDIEKVAHETPEKILKATIDPLVGAQPFQGRELAFQLGLEGKQVQQFAKIFVGLAKLFKDHDLALLEVNPLVIKADGDLHCLDAKINIDANAMYRQPKLKTFHDPSQDDAREAHAAKFELNYVALEGNIGCMVNGAGLAMGTMDIVNLHGGKPANFLDVGGGATKERVTEAFKIILSDSNVAAVLVNIFGGIVRCDMIAEGIIGAVKEVGVKVPVVVRLEGNNAELGAKVLAESGLNIIAATSLTDAAQQVVKAAEGK.

Residues 9–244 form the ATP-grasp domain; the sequence is KQLFAEYGLP…PSQDDAREAH (236 aa). Residues K46, 53–55, E99, T102, and E107 contribute to the ATP site; that span reads GRG. Positions 199 and 213 each coordinate Mg(2+). Residues N264 and 321-323 each bind substrate; that span reads GIV.

This sequence belongs to the succinate/malate CoA ligase beta subunit family. Heterotetramer of two alpha and two beta subunits. The cofactor is Mg(2+).

The enzyme catalyses succinate + ATP + CoA = succinyl-CoA + ADP + phosphate. The catalysed reaction is GTP + succinate + CoA = succinyl-CoA + GDP + phosphate. The protein operates within carbohydrate metabolism; tricarboxylic acid cycle; succinate from succinyl-CoA (ligase route): step 1/1. In terms of biological role, succinyl-CoA synthetase functions in the citric acid cycle (TCA), coupling the hydrolysis of succinyl-CoA to the synthesis of either ATP or GTP and thus represents the only step of substrate-level phosphorylation in the TCA. The beta subunit provides nucleotide specificity of the enzyme and binds the substrate succinate, while the binding sites for coenzyme A and phosphate are found in the alpha subunit. This Pseudomonas entomophila (strain L48) protein is Succinate--CoA ligase [ADP-forming] subunit beta.